Reading from the N-terminus, the 249-residue chain is Methylthioribulose-1-phosphate dehydratase (249 aa).

Cys102 provides a ligand contact to substrate. Zn(2+) contacts are provided by His120 and His122. Glu148 acts as the Proton donor/acceptor in catalysis. Residue His205 coordinates Zn(2+).

It belongs to the aldolase class II family. MtnB subfamily. Zn(2+) is required as a cofactor.

The protein resides in the cytoplasm. The catalysed reaction is 5-(methylsulfanyl)-D-ribulose 1-phosphate = 5-methylsulfanyl-2,3-dioxopentyl phosphate + H2O. Its pathway is amino-acid biosynthesis; L-methionine biosynthesis via salvage pathway; L-methionine from S-methyl-5-thio-alpha-D-ribose 1-phosphate: step 2/6. Functionally, catalyzes the dehydration of methylthioribulose-1-phosphate (MTRu-1-P) into 2,3-diketo-5-methylthiopentyl-1-phosphate (DK-MTP-1-P). The protein is Methylthioribulose-1-phosphate dehydratase of Botryotinia fuckeliana (strain B05.10) (Noble rot fungus).